Reading from the N-terminus, the 580-residue chain is L-aspartate oxidase (580 aa).

FAD-binding positions include 26–29 (SGVA), Lys-49, 56–63 (STRWAQGG), and Asp-227. The active-site Proton donor/acceptor is the Arg-297. Residues Glu-382 and 398–399 (SL) contribute to the FAD site. A disordered region spans residues 556–580 (VHTTDTPEFPPTVHGAQPTHRPQEQ).

It belongs to the FAD-dependent oxidoreductase 2 family. NadB subfamily. Requires FAD as cofactor.

The protein localises to the cytoplasm. The enzyme catalyses L-aspartate + O2 = iminosuccinate + H2O2. It functions in the pathway cofactor biosynthesis; NAD(+) biosynthesis; iminoaspartate from L-aspartate (oxidase route): step 1/1. Its function is as follows. Catalyzes the oxidation of L-aspartate to iminoaspartate, the first step in the de novo biosynthesis of NAD(+). The sequence is that of L-aspartate oxidase (nadB) from Streptomyces coelicolor (strain ATCC BAA-471 / A3(2) / M145).